A 251-amino-acid polypeptide reads, in one-letter code: Pyrroloquinoline-quinone synthase (251 aa).

The protein belongs to the PqqC family.

It carries out the reaction 6-(2-amino-2-carboxyethyl)-7,8-dioxo-1,2,3,4,7,8-hexahydroquinoline-2,4-dicarboxylate + 3 O2 = pyrroloquinoline quinone + 2 H2O2 + 2 H2O + H(+). Its pathway is cofactor biosynthesis; pyrroloquinoline quinone biosynthesis. Functionally, ring cyclization and eight-electron oxidation of 3a-(2-amino-2-carboxyethyl)-4,5-dioxo-4,5,6,7,8,9-hexahydroquinoline-7,9-dicarboxylic-acid to PQQ. This Pseudomonas putida (strain ATCC 47054 / DSM 6125 / CFBP 8728 / NCIMB 11950 / KT2440) protein is Pyrroloquinoline-quinone synthase.